A 316-amino-acid chain; its full sequence is MRANNQIHNALYLAFARQQWAELRKSVPLTLSESDLDDLRGINESISLDEVTDIYLPLSRLLNLIVGAKQQRGLVLNQFLGRVPPKRPYIISIAGSVAVGKSTTARILQALLRQWPEHPKVDLVTTDGFLYPLSELKRRGLLQRKGFPESYDMKLLVEFISKIKAGESLVHAPIYSHISYDRVADTQQAIEQPDILIIEGLNVLQTGQDTHVAIQQPFVSDFVDFSIYVDAEEPLLKEWYISRFLKFRTGAFSDPNSYFHHYSELTDDEATKIAANIWDSINGPNLNLNILPTRDRAHLILRKGTDHMMHQVLMRK.

95–102 (GSVAVGKS) lines the ATP pocket.

This sequence belongs to the prokaryotic pantothenate kinase family.

It is found in the cytoplasm. The catalysed reaction is (R)-pantothenate + ATP = (R)-4'-phosphopantothenate + ADP + H(+). It functions in the pathway cofactor biosynthesis; coenzyme A biosynthesis; CoA from (R)-pantothenate: step 1/5. This Shewanella loihica (strain ATCC BAA-1088 / PV-4) protein is Pantothenate kinase.